A 130-amino-acid chain; its full sequence is UPF0102 protein RSc3265 (130 aa).

This sequence belongs to the UPF0102 family.

The polypeptide is UPF0102 protein RSc3265 (Ralstonia nicotianae (strain ATCC BAA-1114 / GMI1000) (Ralstonia solanacearum)).